Consider the following 193-residue polypeptide: MADQVICALSDVFARWFAYQQQRGIQVCCPEDELRPSPCRYDAQHPERWKPWSRPEMSDLQNIASALECVFHPAIHAYYGHGYAGQITASFKGLAVTLVQPWNEEDFERLQQNLVAHVLMLRRLKLPITLFLATVSDESRVISLDNETGEVVLEQLGKKKRWVLADSLPAFLQRLSPLAQTAVTPAVPVNLPA.

The protein belongs to the Syd family.

It localises to the cell inner membrane. Its function is as follows. Interacts with the SecY protein in vivo. May bind preferentially to an uncomplexed state of SecY, thus functioning either as a chelating agent for excess SecY in the cell or as a regulatory factor that negatively controls the translocase function. In Tolumonas auensis (strain DSM 9187 / NBRC 110442 / TA 4), this protein is Protein Syd.